The chain runs to 230 residues: Modulator of macroautophagy TMEM150B-A (230 aa).

M1 is a topological domain (cytoplasmic). A helical transmembrane segment spans residues 2-22 (WAWALLPICLTIWATAGIWIV). The Extracellular segment spans residues 23–50 (YGMSVSNGSVNLSDGFPYISLCGTDPPQ). N-linked (GlcNAc...) asparagine glycosylation is found at N29 and N33. A helical transmembrane segment spans residues 51 to 71 (SCVFGQVLNVGAMLGVWISAI). The Cytoplasmic segment spans residues 72–83 (RFQQIRDYNCHS). Residues 84–104 (VLNSVSLAMGILCALGTSIVG) traverse the membrane as a helical segment. Residues 105-115 (NFQQSNQLETH) are Extracellular-facing. The chain crosses the membrane as a helical span at residues 116–136 (LAGAFLAFVIGNIYFWMQTAL). Residues 137-150 (TYMVKPTHGGCYIG) lie on the Cytoplasmic side of the membrane. Residues 151-171 (PIRFCLSVACTALIVLMAVFL) form a helical membrane-spanning segment. Topologically, residues 172–183 (KMNMKSISAICE) are extracellular. The chain crosses the membrane as a helical span at residues 184–204 (WIVAMILFLLYGLFAVDFWHL). Topologically, residues 205-230 (DGHYFHVKKRTVIPNEMQVSTVTLSI) are cytoplasmic.

It belongs to the DRAM/TMEM150 family.

The protein resides in the cell membrane. Its subcellular location is the endosome membrane. It is found in the cytoplasmic vesicle. The protein localises to the autophagosome membrane. Modulator of macroautophagy that causes accumulation of autophagosomes under basal conditions and enhances autophagic flux. Represses cell death and promotes long-term clonogenic survival of cells grown in the absence of glucose in a macroautophagy-independent manner. May have some role in extracellular matrix engulfment or growth factor receptor recycling, both of which can modulate cell survival. The chain is Modulator of macroautophagy TMEM150B-A from Xenopus laevis (African clawed frog).